A 342-amino-acid chain; its full sequence is S-adenosylmethionine:tRNA ribosyltransferase-isomerase (342 aa).

It belongs to the QueA family. Monomer.

It localises to the cytoplasm. It carries out the reaction 7-aminomethyl-7-carbaguanosine(34) in tRNA + S-adenosyl-L-methionine = epoxyqueuosine(34) in tRNA + adenine + L-methionine + 2 H(+). The protein operates within tRNA modification; tRNA-queuosine biosynthesis. Transfers and isomerizes the ribose moiety from AdoMet to the 7-aminomethyl group of 7-deazaguanine (preQ1-tRNA) to give epoxyqueuosine (oQ-tRNA). In Shouchella clausii (strain KSM-K16) (Alkalihalobacillus clausii), this protein is S-adenosylmethionine:tRNA ribosyltransferase-isomerase.